Here is a 393-residue protein sequence, read N- to C-terminus: Succinate--CoA ligase [ADP-forming] subunit beta (393 aa).

The ATP-grasp domain occupies 9–251; it reads KALFEKFGVL…LNEEDPKEIE (243 aa). Residues Lys-46, 53–55, Ser-109, and Glu-114 each bind ATP; that span reads GRG. Positions 206 and 220 each coordinate Mg(2+). Substrate is bound by residues Asn-271 and 328–330; that span reads GIM.

It belongs to the succinate/malate CoA ligase beta subunit family. Heterotetramer of two alpha and two beta subunits. Mg(2+) is required as a cofactor.

The enzyme catalyses succinate + ATP + CoA = succinyl-CoA + ADP + phosphate. It carries out the reaction GTP + succinate + CoA = succinyl-CoA + GDP + phosphate. It participates in carbohydrate metabolism; tricarboxylic acid cycle; succinate from succinyl-CoA (ligase route): step 1/1. Its function is as follows. Succinyl-CoA synthetase functions in the citric acid cycle (TCA), coupling the hydrolysis of succinyl-CoA to the synthesis of either ATP or GTP and thus represents the only step of substrate-level phosphorylation in the TCA. The beta subunit provides nucleotide specificity of the enzyme and binds the substrate succinate, while the binding sites for coenzyme A and phosphate are found in the alpha subunit. The polypeptide is Succinate--CoA ligase [ADP-forming] subunit beta (Opitutus terrae (strain DSM 11246 / JCM 15787 / PB90-1)).